We begin with the raw amino-acid sequence, 695 residues long: Threonine--tRNA ligase (695 aa).

The TGS domain maps to 1–66; the sequence is MSAPARPAPA…DTDVEVTPVA (66 aa). Positions 263–569 are catalytic; sequence DHRKLGVELD…LTEHYAGAFP (307 aa). 3 residues coordinate Zn(2+): C368, H419, and H546.

The protein belongs to the class-II aminoacyl-tRNA synthetase family. In terms of assembly, homodimer. Zn(2+) is required as a cofactor.

It is found in the cytoplasm. The enzyme catalyses tRNA(Thr) + L-threonine + ATP = L-threonyl-tRNA(Thr) + AMP + diphosphate + H(+). Its function is as follows. Catalyzes the attachment of threonine to tRNA(Thr) in a two-step reaction: L-threonine is first activated by ATP to form Thr-AMP and then transferred to the acceptor end of tRNA(Thr). Also edits incorrectly charged L-seryl-tRNA(Thr). This is Threonine--tRNA ligase from Mycolicibacterium gilvum (strain PYR-GCK) (Mycobacterium gilvum (strain PYR-GCK)).